We begin with the raw amino-acid sequence, 457 residues long: Argininosuccinate lyase (457 aa).

The protein belongs to the lyase 1 family. Argininosuccinate lyase subfamily.

The protein localises to the cytoplasm. It carries out the reaction 2-(N(omega)-L-arginino)succinate = fumarate + L-arginine. Its pathway is amino-acid biosynthesis; L-arginine biosynthesis; L-arginine from L-ornithine and carbamoyl phosphate: step 3/3. The polypeptide is Argininosuccinate lyase (Erwinia tasmaniensis (strain DSM 17950 / CFBP 7177 / CIP 109463 / NCPPB 4357 / Et1/99)).